Reading from the N-terminus, the 539-residue chain is Membrane protein insertase YidC (539 aa).

Residues 7 to 27 (IIAIALSFVVLVGWSYLADHM) form a helical membrane-spanning segment. A disordered region spans residues 32–64 (QPAPQAQQEETAPSASQAAPQSASQAAAPAPRA). 3 helical membrane-spanning segments follow: residues 347-367 (YVGNYGVAIILLTVVIKLVFW), 418-438 (GGCLPMLVQIPVFFGLYQALL), and 498-518 (IMMFMPVVFTFMFLSFPSGLV).

The protein belongs to the OXA1/ALB3/YidC family. Type 1 subfamily. In terms of assembly, interacts with the Sec translocase complex via SecD. Specifically interacts with transmembrane segments of nascent integral membrane proteins during membrane integration.

Its subcellular location is the cell inner membrane. Functionally, required for the insertion and/or proper folding and/or complex formation of integral membrane proteins into the membrane. Involved in integration of membrane proteins that insert both dependently and independently of the Sec translocase complex, as well as at least some lipoproteins. Aids folding of multispanning membrane proteins. The sequence is that of Membrane protein insertase YidC from Nitratidesulfovibrio vulgaris (strain DSM 19637 / Miyazaki F) (Desulfovibrio vulgaris).